The chain runs to 231 residues: Probable glutathione S-transferase GSTU1 (231 aa).

Residues 5 to 84 (KELVLLDFWV…YLDDAFPGTP (80 aa)) form the GST N-terminal domain. Glutathione contacts are provided by residues serine 15, lysine 42, isoleucine 56, and 68–69 (ES). Residues 97-220 (AAYARATARF…LPSPEKVYDF (124 aa)) enclose the GST C-terminal domain.

It belongs to the GST superfamily. Tau family.

It catalyses the reaction RX + glutathione = an S-substituted glutathione + a halide anion + H(+). Functionally, conjugation of reduced glutathione to a wide number of exogenous and endogenous hydrophobic electrophiles. The polypeptide is Probable glutathione S-transferase GSTU1 (GSTU1) (Oryza sativa subsp. indica (Rice)).